Reading from the N-terminus, the 561-residue chain is DNA mismatch repair protein MutL (561 aa).

This sequence belongs to the DNA mismatch repair MutL/HexB family.

In terms of biological role, this protein is involved in the repair of mismatches in DNA. It is required for dam-dependent methyl-directed DNA mismatch repair. May act as a 'molecular matchmaker', a protein that promotes the formation of a stable complex between two or more DNA-binding proteins in an ATP-dependent manner without itself being part of a final effector complex. The sequence is that of DNA mismatch repair protein MutL from Rippkaea orientalis (strain PCC 8801 / RF-1) (Cyanothece sp. (strain PCC 8801)).